A 281-amino-acid chain; its full sequence is MRLCGFEAGLQHPFFLMAGPCAIESESLALRTAEDLRDICARLGIPFIYKSSYDKANRSSGQSFRGPGMDEGLRILEKVRREVGVPVVTDVHEKEDVSAVAEVVDVLQTPAFLCRQTDFIQAVAAAGKPVNIKKGQFLAPWDMLHVASKAKATGNEQIMVCERGASFGYNNLVSDMRSLAVMRQTGCPVVFDATHSVQLPGGQGDRSGGQREFIPVLARAAVAAGVSGLFMETHPNPADALSDGPNAWPLGRMEDLLRILQHIDHVVKNQDFPENYPEELV.

Belongs to the KdsA family.

It localises to the cytoplasm. The enzyme catalyses D-arabinose 5-phosphate + phosphoenolpyruvate + H2O = 3-deoxy-alpha-D-manno-2-octulosonate-8-phosphate + phosphate. It participates in carbohydrate biosynthesis; 3-deoxy-D-manno-octulosonate biosynthesis; 3-deoxy-D-manno-octulosonate from D-ribulose 5-phosphate: step 2/3. The protein operates within bacterial outer membrane biogenesis; lipopolysaccharide biosynthesis. This is 2-dehydro-3-deoxyphosphooctonate aldolase from Acidithiobacillus ferrooxidans (strain ATCC 23270 / DSM 14882 / CIP 104768 / NCIMB 8455) (Ferrobacillus ferrooxidans (strain ATCC 23270)).